The following is a 259-amino-acid chain: Polycomb group RING finger protein 1 (259 aa).

The segment at 45–84 (CYLCAGYFIDATTITECLHTFCKSCIVKYLQTSKYCPLCN) adopts an RING-type zinc-finger fold.

In terms of assembly, component of a PRC1-like complex.

It is found in the nucleus. Component of a Polycomb group (PcG) multiprotein PRC1-like complex, a complex class required to maintain the transcriptionally repressive state of many genes, including Hox genes, throughout development. PcG PRC1 complex acts via chromatin remodeling and modification of histones; it mediates monoubiquitination of histone H2A 'Lys-119', rendering chromatin heritably changed in its expressibility. This is Polycomb group RING finger protein 1 (pcgf1) from Xenopus laevis (African clawed frog).